The primary structure comprises 139 residues: Ribonuclease P protein component (139 aa).

The protein belongs to the RnpA family. As to quaternary structure, consists of a catalytic RNA component (M1 or rnpB) and a protein subunit.

The enzyme catalyses Endonucleolytic cleavage of RNA, removing 5'-extranucleotides from tRNA precursor.. Its function is as follows. RNaseP catalyzes the removal of the 5'-leader sequence from pre-tRNA to produce the mature 5'-terminus. It can also cleave other RNA substrates such as 4.5S RNA. The protein component plays an auxiliary but essential role in vivo by binding to the 5'-leader sequence and broadening the substrate specificity of the ribozyme. The chain is Ribonuclease P protein component from Paraburkholderia xenovorans (strain LB400).